Reading from the N-terminus, the 480-residue chain is UDP-N-acetylmuramate--L-alanine ligase (480 aa).

122 to 128 lines the ATP pocket; sequence GTHGKTT.

Belongs to the MurCDEF family.

The protein localises to the cytoplasm. The enzyme catalyses UDP-N-acetyl-alpha-D-muramate + L-alanine + ATP = UDP-N-acetyl-alpha-D-muramoyl-L-alanine + ADP + phosphate + H(+). Its pathway is cell wall biogenesis; peptidoglycan biosynthesis. Cell wall formation. This is UDP-N-acetylmuramate--L-alanine ligase from Pseudomonas paraeruginosa (strain DSM 24068 / PA7) (Pseudomonas aeruginosa (strain PA7)).